Consider the following 58-residue polypeptide: MIFPLFGANVLMVVVKSVKNENKEPFFRRGLKNINTKECIVNILIICDSYIKIYNLYN.

This is an uncharacterized protein from Bacillus anthracis.